Consider the following 212-residue polypeptide: uncharacterized protein (212 aa).

This is an uncharacterized protein from Saccharolobus islandicus (Sulfolobus islandicus).